The chain runs to 192 residues: UPF0312 protein PC1_2518 (192 aa).

An N-terminal signal peptide occupies residues 1-23 (MLKKTLLSLTAVSMLASAGSALA).

This sequence belongs to the UPF0312 family. Type 1 subfamily.

The protein localises to the periplasm. The sequence is that of UPF0312 protein PC1_2518 from Pectobacterium carotovorum subsp. carotovorum (strain PC1).